A 195-amino-acid polypeptide reads, in one-letter code: MAPKKKLQLPPPPPTDEEEYWDSQAEEVLDEEEEMMEDWDSLDEASEAEEVSDETPSPSVAFPSPAPQKLATVPSIATTSAPQAPPALPVRRPNRRWDTTGTRAGKSKQPPPLAQEQQQRQGYRSWRGHKNAIVACLQDCGGNISFARRFLLYHHGVAFPRNILHYYRHLYSPYCTGGSGSGSNSSGHTEAKATG.

The segment at 1 to 124 is disordered; sequence MAPKKKLQLP…QEQQQRQGYR (124 aa). The span at 15–53 shows a compositional bias: acidic residues; sequence TDEEEYWDSQAEEVLDEEEEMMEDWDSLDEASEAEEVSD. Low complexity predominate over residues 54–63; sequence ETPSPSVAFP.

The protein belongs to the adenoviridae splicing factor family. Part of a genome packaging complex composed of packaging proteins 1, 2 and 3; this complex specifically binds to the packaging sequence on the left end of viral genomic DNA and performs packaging of the viral genome. Self-assembles into higher-order structures.

The protein localises to the host nucleus. Its function is as follows. Component of the packaging machinery which encapsidates the viral DNA into preformed capsids and transcriptional activator of the viral major late promoter (MLP). Binds, along with packaging proteins 1 and 3, to the specific packaging sequence on the left end of viral genomic DNA and plays an active role in packaging of the viral genome into preformed capsids. Specifically binds to the 5'-TTTG-3' nucleotides of the repeats making up the packaging sequence. Forms a transcription factor called DEF-A through cooperative binding with packaging protein 1. DEF-A binds to downstream elements of the major late promoter (MLP) and stimulates transcription from the MLP after initiation of viral DNA replication. Simultaneously suppresses early gene expression and is thus likely to participate in the early-late switch in the expression pattern of the late viral proteins. May as well enhance transcription from IVa2 and pIX promoters. This Homo sapiens (Human) protein is Packaging protein 2.